The chain runs to 650 residues: Acetyl-coenzyme A synthetase (650 aa).

Residues 191-194 (RGGR), Thr-311, and Asn-335 each bind CoA. ATP is bound by residues 387-389 (GEP), 411-416 (DTWWQT), Asp-500, and Arg-515. Ser-523 contributes to the CoA binding site. Position 526 (Arg-526) interacts with ATP. The Mg(2+) site is built by Val-537, His-539, and Val-542. A CoA-binding site is contributed by Arg-584. Lys-609 is subject to N6-acetyllysine.

It belongs to the ATP-dependent AMP-binding enzyme family. The cofactor is Mg(2+). In terms of processing, acetylated. Deacetylation by the SIR2-homolog deacetylase activates the enzyme.

It catalyses the reaction acetate + ATP + CoA = acetyl-CoA + AMP + diphosphate. Catalyzes the conversion of acetate into acetyl-CoA (AcCoA), an essential intermediate at the junction of anabolic and catabolic pathways. AcsA undergoes a two-step reaction. In the first half reaction, AcsA combines acetate with ATP to form acetyl-adenylate (AcAMP) intermediate. In the second half reaction, it can then transfer the acetyl group from AcAMP to the sulfhydryl group of CoA, forming the product AcCoA. The chain is Acetyl-coenzyme A synthetase from Shewanella sp. (strain MR-4).